A 173-amino-acid polypeptide reads, in one-letter code: Skp-like protein (173 aa).

The first 19 residues, 1 to 19, serve as a signal peptide directing secretion; the sequence is MKKFLLLSLMSLASSTVFA.

The protein belongs to the Skp family.

The sequence is that of Skp-like protein from Chlamydia muridarum (strain MoPn / Nigg).